Reading from the N-terminus, the 215-residue chain is Peroxiredoxin 1 (215 aa).

The Thioredoxin domain occupies Met-1–Val-157. The active-site Cysteine sulfenic acid (-SOH) intermediate is Cys-45. Arg-120 is a substrate binding site.

It belongs to the peroxiredoxin family. Prx6 subfamily. Homodecamer. Pentamer of dimers that assemble into a ring structure.

It localises to the cytoplasm. The catalysed reaction is a hydroperoxide + [thioredoxin]-dithiol = an alcohol + [thioredoxin]-disulfide + H2O. Thiol-specific peroxidase that catalyzes the reduction of hydrogen peroxide and organic hydroperoxides to water and alcohols, respectively. Plays a role in cell protection against oxidative stress by detoxifying peroxides. This chain is Peroxiredoxin 1, found in Sulfuracidifex metallicus (Sulfolobus metallicus).